The following is a 266-amino-acid chain: Small ribosomal subunit protein uS3 (266 aa).

The 69-residue stretch at 39–107 (VREYLKKKLK…PVHVNIEEIR (69 aa)) folds into the KH type-2 domain. The disordered stretch occupies residues 214–266 (PVVEEVTEDKRPRRNARPGDRRPRRDGEGGAPGARRGGPRRGAGKPEDGKTGE). Composition is skewed to basic and acidic residues over residues 230–241 (RPGDRRPRRDGE) and 257–266 (GKPEDGKTGE).

Belongs to the universal ribosomal protein uS3 family. Part of the 30S ribosomal subunit. Forms a tight complex with proteins S10 and S14.

Binds the lower part of the 30S subunit head. Binds mRNA in the 70S ribosome, positioning it for translation. The polypeptide is Small ribosomal subunit protein uS3 (Burkholderia thailandensis (strain ATCC 700388 / DSM 13276 / CCUG 48851 / CIP 106301 / E264)).